We begin with the raw amino-acid sequence, 366 residues long: Peptide chain release factor 2 (366 aa).

Position 251 is an N5-methylglutamine (Q251).

It belongs to the prokaryotic/mitochondrial release factor family. Methylated by PrmC. Methylation increases the termination efficiency of RF2.

Its subcellular location is the cytoplasm. In terms of biological role, peptide chain release factor 2 directs the termination of translation in response to the peptide chain termination codons UGA and UAA. The polypeptide is Peptide chain release factor 2 (Campylobacter lari (strain RM2100 / D67 / ATCC BAA-1060)).